We begin with the raw amino-acid sequence, 382 residues long: MSLKEKTHALFAEKFGYPATTHIQAPGRVNLIGEHTDYNDGFVLPCAIDYQTVISCAKRDDRRVRVVAADYDNETDEFSLDEPILTHDSQQWSNYVRGVVKHLQQRDPGFGGADLVISGNVPQGAGLSSSASLEVAVGTVFRHLYHLSLDGAQIALNGQEAENQFVGCNCGIMDQLISALGKKDHALLIDCRSLGTKAVPMPQGVAVVIINSNFKRTLVGSEYNTRREQCETGARFFTQKALRDVSLDQFNAVAHELDPIVAKRVRHVLTENARTVEAADALAKGNLTRMGELMAESHASMRDDFEITVPQIDTLVEIVKSVIGDKGGVRMTGGGFGGCVVALVPEALVPEVQAAVEAQYEARTGIKETFYVCKPSEGAGLC.

Residue 34–37 (EHTD) coordinates substrate. 124 to 130 (GAGLSSS) provides a ligand contact to ATP. Ser-130 and Glu-162 together coordinate Mg(2+). Asp-174 (proton acceptor) is an active-site residue. Tyr-223 contacts substrate.

The protein belongs to the GHMP kinase family. GalK subfamily.

Its subcellular location is the cytoplasm. It catalyses the reaction alpha-D-galactose + ATP = alpha-D-galactose 1-phosphate + ADP + H(+). It functions in the pathway carbohydrate metabolism; galactose metabolism. Its function is as follows. Catalyzes the transfer of the gamma-phosphate of ATP to D-galactose to form alpha-D-galactose-1-phosphate (Gal-1-P). The polypeptide is Galactokinase (Cronobacter sakazakii (strain ATCC BAA-894) (Enterobacter sakazakii)).